The primary structure comprises 97 residues: Large ribosomal subunit protein uL23 (97 aa).

It belongs to the universal ribosomal protein uL23 family. In terms of assembly, part of the 50S ribosomal subunit. Contacts protein L29, and trigger factor when it is bound to the ribosome.

Its function is as follows. One of the early assembly proteins it binds 23S rRNA. One of the proteins that surrounds the polypeptide exit tunnel on the outside of the ribosome. Forms the main docking site for trigger factor binding to the ribosome. This is Large ribosomal subunit protein uL23 from Brucella suis (strain ATCC 23445 / NCTC 10510).